Here is a 492-residue protein sequence, read N- to C-terminus: Protein nucleotidyltransferase YdiU (492 aa).

Residues G101, G103, R104, K124, D136, G137, R187, and R194 each contribute to the ATP site. The active-site Proton acceptor is the D268. Mg(2+) is bound by residues N269 and D278. Residue D278 coordinates ATP.

It belongs to the SELO family. The cofactor is Mg(2+). Mn(2+) is required as a cofactor.

The enzyme catalyses L-seryl-[protein] + ATP = 3-O-(5'-adenylyl)-L-seryl-[protein] + diphosphate. It carries out the reaction L-threonyl-[protein] + ATP = 3-O-(5'-adenylyl)-L-threonyl-[protein] + diphosphate. The catalysed reaction is L-tyrosyl-[protein] + ATP = O-(5'-adenylyl)-L-tyrosyl-[protein] + diphosphate. It catalyses the reaction L-histidyl-[protein] + UTP = N(tele)-(5'-uridylyl)-L-histidyl-[protein] + diphosphate. The enzyme catalyses L-seryl-[protein] + UTP = O-(5'-uridylyl)-L-seryl-[protein] + diphosphate. It carries out the reaction L-tyrosyl-[protein] + UTP = O-(5'-uridylyl)-L-tyrosyl-[protein] + diphosphate. Its function is as follows. Nucleotidyltransferase involved in the post-translational modification of proteins. It can catalyze the addition of adenosine monophosphate (AMP) or uridine monophosphate (UMP) to a protein, resulting in modifications known as AMPylation and UMPylation. The sequence is that of Protein nucleotidyltransferase YdiU from Corynebacterium efficiens (strain DSM 44549 / YS-314 / AJ 12310 / JCM 11189 / NBRC 100395).